A 299-amino-acid chain; its full sequence is Glycine--tRNA ligase alpha subunit (299 aa).

The protein belongs to the class-II aminoacyl-tRNA synthetase family. In terms of assembly, tetramer of two alpha and two beta subunits.

It localises to the cytoplasm. The catalysed reaction is tRNA(Gly) + glycine + ATP = glycyl-tRNA(Gly) + AMP + diphosphate. In Caulobacter vibrioides (strain ATCC 19089 / CIP 103742 / CB 15) (Caulobacter crescentus), this protein is Glycine--tRNA ligase alpha subunit.